The sequence spans 423 residues: MTISIRGARVIDPASDLDQVGDLHIEAGKIVAIGAAPAGFSAQKTLDGAGLVAAPGLVDLSVALREPGYGRKGNVESETRAAAAGGTTSLCCPPYTRPVLDTPAVAELILDRAREAGNAKVYPIGALTRGFGGEQLSELVALRDTGCVAFTNGLHGFASNRILRRALEYAATFDLTVIFTSQDTDLAEGGLAHEGPTASFLGLAGIPETAETVALARNLLLVEQSGVRAHFSQLTSARGIELVAQAQARGLPVTCDVALYQLILTDEALVGFSSLYHVQPPLRTRADREALREAVKNGVVQAIASHHQPHEADAKNAPFAATEPGISGAELLLPLAMTLVQDGLLDLPTLLARLSHGPAQALRLPAGRLAVGQAADLVLFDPQGSTLAGESWYSKGQNSPFVGHCLPGRVRYTLVDGHLTHEG.

The protein belongs to the metallo-dependent hydrolases superfamily. DHOase family. PyrC' subfamily. In terms of assembly, heterododecamer of 6 active PyrB subunits and 6 non-catalytic PyrC' subunits.

In terms of biological role, non-functional DHOase. In Pseudomonas aeruginosa (strain ATCC 15692 / DSM 22644 / CIP 104116 / JCM 14847 / LMG 12228 / 1C / PRS 101 / PAO1), this protein is Dihydroorotase-like protein (pyrC').